The following is a 132-amino-acid chain: Small ribosomal subunit protein uS11 (132 aa).

Belongs to the universal ribosomal protein uS11 family. As to quaternary structure, part of the 30S ribosomal subunit. Interacts with proteins S7 and S18. Binds to IF-3.

Functionally, located on the platform of the 30S subunit, it bridges several disparate RNA helices of the 16S rRNA. Forms part of the Shine-Dalgarno cleft in the 70S ribosome. In Bifidobacterium animalis subsp. lactis (strain AD011), this protein is Small ribosomal subunit protein uS11.